Reading from the N-terminus, the 356-residue chain is Replication factor C subunit 3 (356 aa).

Lys-20 carries the post-translational modification N6-acetyllysine. Position 125 is a phosphoserine (Ser-125).

The protein belongs to the activator 1 small subunits family. Subunit of the RFC complex, an heteropentameric complex consisting of a large subunit RFC1 and four small subunits RFC2, RFC3, RFC4 and RFC5; the RFC complex interacts with PCNA. Forms an heterotetrameric complex with RFC2, RFC4 and RFC5; this complex has ATPase activity but is not stimulated by PCNA. The heterotetramer of subunits RFC2, RFC3, RFC4 and RFC5 interacts with RAD17. Interacts with CNTD1; this interaction facilitates crossover formation.

It localises to the nucleus. Its function is as follows. Subunit of the replication factor C (RFC) complex which acts during elongation of primed DNA templates by DNA polymerases delta and epsilon, and is necessary for ATP-dependent loading of proliferating cell nuclear antigen (PCNA) onto primed DNA. The chain is Replication factor C subunit 3 (RFC3) from Bos taurus (Bovine).